We begin with the raw amino-acid sequence, 274 residues long: MKLEKDNAMDRADTLEQQNKEANNRAEKSEEEVHNLQKRMQQLENDLDQVQESLLKANNQLVEKDKALSNAEGEVAALNRRIQLLEEDLERSEERLNTATTKLAEASQAADESERMRKVLENRSLSDEERMDALENQLKEARFLAEEADRKYDEVARKLAMVEADLERAEERAETGESKIVELEEELRVVGNNLKSLEVSEEKANQREEAYKEQIKTLTNKLKAAEARAEFAERSVQKLQKEVDRLEDELVNEKEKYKSITDELDQTFSELSGY.

The segment covering 1–35 has biased composition (basic and acidic residues); the sequence is MKLEKDNAMDRADTLEQQNKEANNRAEKSEEEVHN. Residues 1-45 form a disordered region; sequence MKLEKDNAMDRADTLEQQNKEANNRAEKSEEEVHNLQKRMQQLEN. Positions 1 to 274 form a coiled coil; sequence MKLEKDNAMD…DQTFSELSGY (274 aa).

Belongs to the tropomyosin family. Homodimer.

Functionally, tropomyosin, in association with the troponin complex, plays a central role in the calcium dependent regulation of muscle contraction. This chain is Tropomyosin, found in Metapenaeus ensis (Greasyback shrimp).